A 506-amino-acid chain; its full sequence is Nondiscriminating glutamyl-tRNA synthetase EARS2, mitochondrial (506 aa).

A mitochondrion-targeting transit peptide spans 1–41 (MAALLRRLLQRGRPLAASGRRVGRREARLGTGPGVAVRVRF). L-glutamate is bound at residue 40–42 (RFA). Residues 45–53 (PTGFLHLGG) carry the 'HIGH' region motif. Position 50 (H50) interacts with ATP. L-glutamate-binding positions include E76, 228-232 (YHLAC), and R246. An ATP-binding site is contributed by E249. An N6-succinyllysine modification is found at K256. 284–288 (KLSKR) is an ATP binding site. The 'KMSKS' region signature appears at 284 to 288 (KLSKR). K486 is subject to N6-acetyllysine.

Belongs to the class-I aminoacyl-tRNA synthetase family. Glutamate--tRNA ligase type 1 subfamily.

The protein resides in the mitochondrion matrix. It catalyses the reaction tRNA(Glx) + L-glutamate + ATP = L-glutamyl-tRNA(Glx) + AMP + diphosphate. The catalysed reaction is tRNA(Glu) + L-glutamate + ATP = L-glutamyl-tRNA(Glu) + AMP + diphosphate. It carries out the reaction tRNA(Gln) + L-glutamate + ATP = L-glutamyl-tRNA(Gln) + AMP + diphosphate. Non-discriminating glutamyl-tRNA synthetase that catalyzes aminoacylation of both mitochondrial tRNA(Glu) and tRNA(Gln) and participates in RNA aminoacylation for mitochondrial protein translation. Attachs glutamate to tRNA(Glu) or tRNA(Gln) in a two-step reaction: glutamate is first activated by ATP to form Glu-AMP and then transferred to the acceptor end of tRNA(Glu) or tRNA(Gln). In vitro, cytoplasmic tRNA(Gln) is slightly glutamylated, but with low activity. The sequence is that of Nondiscriminating glutamyl-tRNA synthetase EARS2, mitochondrial from Macaca fascicularis (Crab-eating macaque).